We begin with the raw amino-acid sequence, 112 residues long: Small ribosomal subunit protein bS6 (112 aa).

This sequence belongs to the bacterial ribosomal protein bS6 family.

Its function is as follows. Binds together with bS18 to 16S ribosomal RNA. The sequence is that of Small ribosomal subunit protein bS6 from Legionella pneumophila (strain Paris).